Reading from the N-terminus, the 668-residue chain is Threonine--tRNA ligase (668 aa).

The TGS domain occupies 1 to 64 (MSQAISLTFP…TDGKIEIITR (64 aa)). The catalytic stretch occupies residues 245–553 (DHRKLGREMD…LIENFAGHMP (309 aa)). 3 residues coordinate Zn(2+): C347, H398, and H530.

This sequence belongs to the class-II aminoacyl-tRNA synthetase family. In terms of assembly, homodimer. Requires Zn(2+) as cofactor.

Its subcellular location is the cytoplasm. The enzyme catalyses tRNA(Thr) + L-threonine + ATP = L-threonyl-tRNA(Thr) + AMP + diphosphate + H(+). Its function is as follows. Catalyzes the attachment of threonine to tRNA(Thr) in a two-step reaction: L-threonine is first activated by ATP to form Thr-AMP and then transferred to the acceptor end of tRNA(Thr). Also edits incorrectly charged L-seryl-tRNA(Thr). The sequence is that of Threonine--tRNA ligase from Rhizobium etli (strain CIAT 652).